The chain runs to 481 residues: Zinc metalloproteinase/disintegrin (481 aa).

An N-terminal signal peptide occupies residues 1-20 (MIQVLLVTICLAVFPYQGSS). The propeptide occupies 21–190 (IILESGNVDD…KASQLYLTPE (170 aa)). The 196-residue stretch at 197–392 (RHIELAIVVD…KKPQCILNAP (196 aa)) folds into the Peptidase M12B domain. The Ca(2+) site is built by E200 and D284. Cystine bridges form between C308–C387, C349–C371, and C351–C354. H333 is a Zn(2+) binding site. The active site involves E334. Residues H337 and H343 each coordinate Zn(2+). Ca(2+)-binding residues include C387 and N390. Positions 393–410 (LRTDTVSTPISGNEFLEA) are excised as a propeptide. Residues 400 to 481 (TPISGNEFLE…ADCPRNGLYG (82 aa)) enclose the Disintegrin domain. 6 disulfides stabilise this stretch: C414–C429, C416–C424, C423–C446, C437–C443, C442–C467, and C455–C474. The short motif at 459 to 461 (RGD) is the Cell attachment site element.

This sequence belongs to the venom metalloproteinase (M12B) family. P-II subfamily. P-IIa sub-subfamily. As to quaternary structure, monomer. It depends on Zn(2+) as a cofactor. As to expression, expressed by the venom gland.

The protein resides in the secreted. Impairs hemostasis in the envenomed animal. In terms of biological role, inhibits platelet aggregation induced by ADP and collagen. Acts by inhibiting fibrinogen interaction with platelet receptors GPIIb/GPIIIa (ITGA2B/ITGB3). Has antitumor-growth activity. The chain is Zinc metalloproteinase/disintegrin from Protobothrops jerdonii (Jerdon's pitviper).